The following is a 153-amino-acid chain: Ribosome maturation factor RimP (153 aa).

Belongs to the RimP family.

The protein resides in the cytoplasm. Functionally, required for maturation of 30S ribosomal subunits. The polypeptide is Ribosome maturation factor RimP (Psychromonas ingrahamii (strain DSM 17664 / CCUG 51855 / 37)).